A 185-amino-acid chain; its full sequence is Protein P21 (185 aa).

The sequence is that of Protein P21 from Vitis vinifera (Grape).